The chain runs to 238 residues: Endothelial protein C receptor (238 aa).

An N-terminal signal peptide occupies residues 1-17; it reads MLTTLLPILLLSGWAFC. Topologically, residues 18–210 are extracellular; that stretch reads SQDASDGLQR…GSQTSRSYTS (193 aa). 4 N-linked (GlcNAc...) asparagine glycosylation sites follow: Asn47, Asn64, Asn136, and Asn172. A disulfide bridge links Cys118 with Cys186. The helical transmembrane segment at 211–231 threads the bilayer; the sequence is LVLGVLVGSFIIAGVAVGIFL. At 232–238 the chain is on the cytoplasmic side; that stretch reads CTGGRRC.

Post-translationally, N-glycosylated. In terms of processing, a soluble form exists; probably released by a metalloprotease. Seems to have the same activity as the membrane-bound form. Expressed strongly in the endothelial cells of arteries and veins in heart and lung, less intensely in capillaries in the lung and skin, and not at all in the endothelium of small vessels of the liver and kidney.

The protein localises to the membrane. Functionally, binds activated protein C. Enhances protein C activation by the thrombin-thrombomodulin complex; plays a role in the protein C pathway controlling blood coagulation. This Homo sapiens (Human) protein is Endothelial protein C receptor (PROCR).